We begin with the raw amino-acid sequence, 515 residues long: Microtubule-associated protein 70-4 (515 aa).

2 coiled-coil regions span residues 26–106 (VVDE…ALSA) and 136–351 (LESD…NTSA). The interval 208–410 (LLEKSNRQQV…KQPGSETEAA (203 aa)) is required for targeting to microtubules. A disordered region spans residues 340–515 (DDMRNESSNT…VKSTKDSCEI (176 aa)). Residues 345-362 (ESSNTSASNKDNATSKQA) show a composition bias toward polar residues. Low complexity predominate over residues 364 to 374 (PKRSSSQPRRP). Basic and acidic residues-rich tracts occupy residues 409-425 (AAEKNRHAAAKRFDSPR), 450-461 (KVADDAGKENKE), and 484-515 (SEHEEAMDLRKLDEGKADDSDAVKSTKDSCEI).

It belongs to the MAP70 family.

It is found in the cytoplasm. Its subcellular location is the cytoskeleton. Plant-specific protein that interact with microtubules. The polypeptide is Microtubule-associated protein 70-4 (MAP70.4) (Oryza sativa subsp. japonica (Rice)).